We begin with the raw amino-acid sequence, 275 residues long: uncharacterized protein (275 aa).

Residues 1 to 162 (NLFSVIVSLI…ITSYWTEVQR (162 aa)) enclose the ABC transmembrane type-1 domain. The next 3 helical transmembrane spans lie at 21–41 (LYLV…GNIM), 106–126 (IMNL…YYLM), and 137–157 (FAYV…TSYW).

Its subcellular location is the cell membrane. This is an uncharacterized protein from Staphylococcus epidermidis.